A 199-amino-acid polypeptide reads, in one-letter code: FMN-dependent NADH:quinone oxidoreductase (199 aa).

FMN is bound at residue serine 10.

It belongs to the azoreductase type 1 family. As to quaternary structure, homodimer. It depends on FMN as a cofactor.

The catalysed reaction is 2 a quinone + NADH + H(+) = 2 a 1,4-benzosemiquinone + NAD(+). It catalyses the reaction N,N-dimethyl-1,4-phenylenediamine + anthranilate + 2 NAD(+) = 2-(4-dimethylaminophenyl)diazenylbenzoate + 2 NADH + 2 H(+). Its function is as follows. Quinone reductase that provides resistance to thiol-specific stress caused by electrophilic quinones. Functionally, also exhibits azoreductase activity. Catalyzes the reductive cleavage of the azo bond in aromatic azo compounds to the corresponding amines. This is FMN-dependent NADH:quinone oxidoreductase from Cellvibrio japonicus (strain Ueda107) (Pseudomonas fluorescens subsp. cellulosa).